A 218-amino-acid polypeptide reads, in one-letter code: NADH dehydrogenase [ubiquinone] iron-sulfur protein 7, mitochondrial (218 aa).

Residues 34 to 48 show a composition bias toward low complexity; the sequence is LPALSPSTSPTSYTR. A disordered region spans residues 34–61; sequence LPALSPSTSPTSYTRPGPPSTSPPPPGL. A compositionally biased stretch (pro residues) spans 49–60; that stretch reads PGPPSTSPPPPG. [4Fe-4S] cluster is bound by residues Cys93, Cys94, Cys158, and Cys188.

This sequence belongs to the complex I 20 kDa subunit family. Complex I is composed of at least 49 different subunits. This is a component of the iron-sulfur (IP) fragment of the enzyme. It depends on [4Fe-4S] cluster as a cofactor.

The protein localises to the mitochondrion. The catalysed reaction is a ubiquinone + NADH + 5 H(+)(in) = a ubiquinol + NAD(+) + 4 H(+)(out). Functionally, core subunit of the mitochondrial membrane respiratory chain NADH dehydrogenase (Complex I) that is believed to belong to the minimal assembly required for catalysis. Complex I functions in the transfer of electrons from NADH to the respiratory chain. The immediate electron acceptor for the enzyme is believed to be ubiquinone. The chain is NADH dehydrogenase [ubiquinone] iron-sulfur protein 7, mitochondrial from Arabidopsis thaliana (Mouse-ear cress).